Consider the following 308-residue polypeptide: Glutaminase (308 aa).

Residues serine 66, asparagine 117, glutamate 161, asparagine 168, tyrosine 192, tyrosine 244, and valine 262 each coordinate substrate.

Belongs to the glutaminase family. Homotetramer.

It carries out the reaction L-glutamine + H2O = L-glutamate + NH4(+). This chain is Glutaminase, found in Salmonella heidelberg (strain SL476).